A 301-amino-acid polypeptide reads, in one-letter code: Rhodopsin (301 aa).

Residues 1–18 (LHMIHLHWYQYPPMNPMM) are Extracellular-facing. The helical transmembrane segment at 19-43 (YPLLLIFMFITGIPCLAGNFVTIWV) threads the bilayer. Over 44–55 (FMTTKSLRSPAN) the chain is Cytoplasmic. Residues 56-78 (LLVVNLAMSDFLMMFTMFPPMMI) traverse the membrane as a helical segment. Residues 79–92 (TCYYHTWTLGPTFC) lie on the Extracellular side of the membrane. A disulfide bond links C92 and C169. The chain crosses the membrane as a helical span at residues 93–115 (QVYAFLGNLFGCTSIWTMVFITF). The 'Ionic lock' involved in activated form stabilization motif lies at 116 to 118 (DRY). Topologically, residues 116-134 (DRYNVIVKGVAGEPLSNKK) are cytoplasmic. A helical transmembrane segment spans residues 135-155 (AALWILSAWVLSFSWCSAPFF). Residues 156–182 (GWNRYVPEGNLTGCGTDYLSEDALSRS) are Extracellular-facing. N165 carries N-linked (GlcNAc...) asparagine glycosylation. Residues 183–204 (YLYVYSVWVYFLPLLITIYCYV) traverse the membrane as a helical segment. Residues 205–245 (FIIKAVAAHEKGMRDQAKKMGIKSLRNEEAQKTSAECRLAK) are Cytoplasmic-facing. Residues 246–267 (IAMTTVALWFIAWTPYLLINWV) traverse the membrane as a helical segment. The Extracellular portion of the chain corresponds to 268–278 (GMFARSYLSPV). A helical transmembrane segment spans residues 279 to 300 (YTIWGYVFAKANAVYNPIVYAI). K288 carries the N6-(retinylidene)lysine modification.

This sequence belongs to the G-protein coupled receptor 1 family. Opsin subfamily. In terms of assembly, homodimer. Interacts with GNAQ. Contains one covalently linked retinal chromophore.

The protein localises to the cell projection. It is found in the rhabdomere membrane. Photoreceptor required for image-forming vision at low light intensity. Can use both retinal and 3-dehydroretinal as visual pigment. Light-induced isomerization of 11-cis to all-trans retinal triggers a conformational change that activates signaling via G-proteins. Signaling via GNAQ probably mediates the activation of phospholipase C. The sequence is that of Rhodopsin (RHO) from Cambarellus shufeldtii (Cajun dwarf crayfish).